We begin with the raw amino-acid sequence, 374 residues long: Queuine tRNA-ribosyltransferase (374 aa).

The active-site Proton acceptor is Asp-91. Substrate-binding positions include 91–95, Asp-145, Gln-189, and Gly-216; that span reads DSGGY. Residues 247-253 are RNA binding; the sequence is GVGTVPD. Asp-266 acts as the Nucleophile in catalysis. Residues 271 to 275 are RNA binding; important for wobble base 34 recognition; the sequence is TRNAR. Zn(2+) is bound by residues Cys-304, Cys-306, Cys-309, and His-335.

The protein belongs to the queuine tRNA-ribosyltransferase family. Homodimer. Within each dimer, one monomer is responsible for RNA recognition and catalysis, while the other monomer binds to the replacement base PreQ1. Zn(2+) is required as a cofactor.

The enzyme catalyses 7-aminomethyl-7-carbaguanine + guanosine(34) in tRNA = 7-aminomethyl-7-carbaguanosine(34) in tRNA + guanine. The protein operates within tRNA modification; tRNA-queuosine biosynthesis. Catalyzes the base-exchange of a guanine (G) residue with the queuine precursor 7-aminomethyl-7-deazaguanine (PreQ1) at position 34 (anticodon wobble position) in tRNAs with GU(N) anticodons (tRNA-Asp, -Asn, -His and -Tyr). Catalysis occurs through a double-displacement mechanism. The nucleophile active site attacks the C1' of nucleotide 34 to detach the guanine base from the RNA, forming a covalent enzyme-RNA intermediate. The proton acceptor active site deprotonates the incoming PreQ1, allowing a nucleophilic attack on the C1' of the ribose to form the product. After dissociation, two additional enzymatic reactions on the tRNA convert PreQ1 to queuine (Q), resulting in the hypermodified nucleoside queuosine (7-(((4,5-cis-dihydroxy-2-cyclopenten-1-yl)amino)methyl)-7-deazaguanosine). The protein is Queuine tRNA-ribosyltransferase of Leptospira interrogans serogroup Icterohaemorrhagiae serovar Lai (strain 56601).